Here is a 345-residue protein sequence, read N- to C-terminus: Probable G-protein coupled receptor 139 (345 aa).

At 1-21 (MEHTHAHLAANSSACGLGFVP) the chain is on the extracellular side. An N-linked (GlcNAc...) asparagine glycan is attached at Asn11. Residues 22–42 (VVYYSFLLCLGLPANILTVII) form a helical membrane-spanning segment. At 43-57 (LSQLVARRQKSSYNY) the chain is on the cytoplasmic side. A helical membrane pass occupies residues 58-78 (LLALAAADILVLFFIVFVDFL). Over 79–94 (LEDFILTMQMPLIPDK) the chain is Extracellular. A helical membrane pass occupies residues 95 to 115 (IIEVLEFSSIHTSIWITVPLT). At 116-140 (VDRYIAVCHPLKYHTVSYPARTRKV) the chain is on the cytoplasmic side. Residues 141–161 (ILSVYITCFLTSIPYYWWPNI) traverse the membrane as a helical segment. Over 162 to 173 (WTEDYISTSMHH) the chain is Extracellular. Residues 174–194 (VLVWIHCFTVYLVPCSIFFIL) traverse the membrane as a helical segment. Over 195–220 (NSIIVYKLRRKSNFRLRGYSTGKTTA) the chain is Cytoplasmic. The chain crosses the membrane as a helical span at residues 221–241 (ILFTITSIFATLWAPRIIMIL). At 242 to 260 (YHLYGAPIQNPWLVHIMLD) the chain is on the extracellular side. A helical transmembrane segment spans residues 261–281 (VANMLALLNTAINFFLYCFIS). The Cytoplasmic portion of the chain corresponds to 282-345 (KRFRTMAAAT…KHGKPIKVSP (64 aa)).

The protein belongs to the G-protein coupled receptor 1 family. In terms of tissue distribution, expressed almost exclusively in the brain. Abundantly expressed in the ventrolateral region of caudate putamen, the habenular nucleus, the zona incerta, and the medial mammillary nucleus.

The protein resides in the cell membrane. Orphan receptor. Seems to act through a G(q/11)-mediated pathway. The protein is Probable G-protein coupled receptor 139 (Gpr139) of Mus musculus (Mouse).